We begin with the raw amino-acid sequence, 282 residues long: ATP synthase gamma chain (282 aa).

This sequence belongs to the ATPase gamma chain family. In terms of assembly, F-type ATPases have 2 components, CF(1) - the catalytic core - and CF(0) - the membrane proton channel. CF(1) has five subunits: alpha(3), beta(3), gamma(1), delta(1), epsilon(1). CF(0) has three main subunits: a, b and c.

It is found in the cell inner membrane. Its function is as follows. Produces ATP from ADP in the presence of a proton gradient across the membrane. The gamma chain is believed to be important in regulating ATPase activity and the flow of protons through the CF(0) complex. This Fusobacterium nucleatum subsp. nucleatum (strain ATCC 25586 / DSM 15643 / BCRC 10681 / CIP 101130 / JCM 8532 / KCTC 2640 / LMG 13131 / VPI 4355) protein is ATP synthase gamma chain.